The following is a 701-amino-acid chain: Larval serum protein 2 (701 aa).

Positions 1-21 (MKSFTVIALAAVALLATLGQA) are cleaved as a signal peptide. Asparagine 204 is a glycosylation site (N-linked (GlcNAc...) asparagine).

This sequence belongs to the hemocyanin family. As to quaternary structure, homohexamer.

It localises to the secreted. It is found in the extracellular space. Larval storage protein (LSP) which may serve as a store of amino acids for synthesis of adult proteins. The protein is Larval serum protein 2 (Lsp2) of Drosophila melanogaster (Fruit fly).